The following is a 688-amino-acid chain: Glycine--tRNA ligase beta subunit (688 aa).

It belongs to the class-II aminoacyl-tRNA synthetase family. As to quaternary structure, tetramer of two alpha and two beta subunits.

It is found in the cytoplasm. The enzyme catalyses tRNA(Gly) + glycine + ATP = glycyl-tRNA(Gly) + AMP + diphosphate. This is Glycine--tRNA ligase beta subunit from Aliivibrio fischeri (strain MJ11) (Vibrio fischeri).